Here is a 383-residue protein sequence, read N- to C-terminus: Chitinase-3-like protein 1 (383 aa).

Positions 1–21 (MGLRVAQTGFVALVLLQSCAA) are cleaved as a signal peptide. One can recognise a GH18 domain in the interval 22–383 (YKLVCYYTSW…SAIKDVLAAA (362 aa)). Cys26 and Cys51 are oxidised to a cystine. A glycan (N-linked (GlcNAc...) asparagine) is linked at Asn60. Chitin-binding positions include 70–71 (EW), 97–100 (GGWN), Tyr141, 204–207 (LTYD), and Arg263. Cysteines 300 and 364 form a disulfide. The important for AKT1 activation and IL8 production stretch occupies residues 324–338 (QWVGYDDQESVKNKA). Position 352 (Trp352) interacts with chitin.

This sequence belongs to the glycosyl hydrolase 18 family. Monomer. As to expression, detected in smooth muscle cells in atherosclerotic plaques. Detected in regions of vascular occlusion in the aorta.

The protein localises to the secreted. Its subcellular location is the extracellular space. It is found in the cytoplasm. It localises to the perinuclear region. The protein resides in the endoplasmic reticulum. Carbohydrate-binding lectin with a preference for chitin. Has no chitinase activity. May play a role in tissue remodeling and in the capacity of cells to respond to and cope with changes in their environment. Plays a role in T-helper cell type 2 (Th2) inflammatory response and IL-13-induced inflammation, regulating allergen sensitization, inflammatory cell apoptosis, dendritic cell accumulation and M2 macrophage differentiation. Facilitates invasion of pathogenic enteric bacteria into colonic mucosa and lymphoid organs. Mediates activation of AKT1 signaling pathway and subsequent IL8 production in colonic epithelial cells. Regulates antibacterial responses in lung by contributing to macrophage bacterial killing, controlling bacterial dissemination and augmenting host tolerance. Also regulates hyperoxia-induced injury, inflammation and epithelial apoptosis in lung. Stimulates migration and adhesion of cultured vascular smooth muscle cells. This Sus scrofa (Pig) protein is Chitinase-3-like protein 1 (CHI3L1).